The sequence spans 467 residues: Protein arginine methyltransferase NDUFAF7 homolog, mitochondrial (467 aa).

It belongs to the NDUFAF7 family.

It localises to the mitochondrion. It catalyses the reaction L-arginyl-[protein] + 2 S-adenosyl-L-methionine = N(omega),N(omega)'-dimethyl-L-arginyl-[protein] + 2 S-adenosyl-L-homocysteine + 2 H(+). Arginine methyltransferase involved in the assembly or stability of mitochondrial NADH:ubiquinone oxidoreductase complex (complex I). The polypeptide is Protein arginine methyltransferase NDUFAF7 homolog, mitochondrial (Schizosaccharomyces pombe (strain 972 / ATCC 24843) (Fission yeast)).